Here is a 102-residue protein sequence, read N- to C-terminus: Major basic nuclear protein 2 (102 aa).

A compositionally biased stretch (basic residues) spans 1-11; sequence MKAMKATKKAM. Positions 1–43 are disordered; the sequence is MKAMKATKKAMTKTGLAEALAPKPSSARRIAPPSSRAWPPSAQ. A compositionally biased stretch (low complexity) spans 21–42; that stretch reads APKPSSARRIAPPSSRAWPPSA.

It localises to the nucleus. The sequence is that of Major basic nuclear protein 2 (HCc2) from Crypthecodinium cohnii (Dinoflagellate).